The chain runs to 222 residues: Vacuolar protein sorting-associated protein 2 homolog 2 (222 aa).

2 coiled-coil regions span residues 26-83 (RGIE…AQIR) and 143-222 (SEAI…LRRI). Positions 179-222 (SSAPKGRIATKTAAPPASTAATNKNSESSEVDELEKRLASLRRI) are disordered. Residues 187–203 (ATKTAAPPASTAATNKN) are compositionally biased toward low complexity.

Belongs to the SNF7 family. As to quaternary structure, component of the endosomal sorting required for transport complex III (ESCRT-III), composed at least of VPS2, VPS20, VPS24 and VPS32. Interacts with CHMP1A, CHMP1B and VPS60-1.

It localises to the endosome. Component of the ESCRT-III complex, which is required for multivesicular bodies (MVBs) formation and sorting of endosomal cargo proteins into MVBs. The ESCRT-III complex is probably involved in the concentration of MVB cargo. This chain is Vacuolar protein sorting-associated protein 2 homolog 2 (VPS2.2), found in Arabidopsis thaliana (Mouse-ear cress).